The following is a 339-amino-acid chain: MRAYLRPLSFLYDQVVGVKNNLYDRGVFGVFKAPVPVVSIGNLTVGGTGKTPITDFCLKSLVADGKKVAVISRSYRADASAPCLVDVDHPFAARYFGDEPVLLAQANPQVSVYVGPSKWRTARYAVEKHKYDLLIVDDGFQHRRLHRDLNIVILDATESLSNYEVLPEGRARESWAGIERADVLILSKCNLAPEDELKALEARLPKNKEVLYFGYEIQQCQNVKTGQVLHRDELKGKKLFLVSAIARPDVFEKMMREIGEVSNQSLHFRDHHQYTADDVKNIENAFKKSQADYLVTTGKDAVKLRQLFNDTAILWSTSLEVAESGRKGRLHEIITQVLR.

44-51 (TVGGTGKT) is an ATP binding site.

Belongs to the LpxK family.

It catalyses the reaction a lipid A disaccharide + ATP = a lipid IVA + ADP + H(+). Its pathway is glycolipid biosynthesis; lipid IV(A) biosynthesis; lipid IV(A) from (3R)-3-hydroxytetradecanoyl-[acyl-carrier-protein] and UDP-N-acetyl-alpha-D-glucosamine: step 6/6. Functionally, transfers the gamma-phosphate of ATP to the 4'-position of a tetraacyldisaccharide 1-phosphate intermediate (termed DS-1-P) to form tetraacyldisaccharide 1,4'-bis-phosphate (lipid IVA). The sequence is that of Tetraacyldisaccharide 4'-kinase from Bdellovibrio bacteriovorus (strain ATCC 15356 / DSM 50701 / NCIMB 9529 / HD100).